The sequence spans 335 residues: Nod factor export ATP-binding protein I (335 aa).

The segment covering 1 to 10 (MTQEVPRRLE) has biased composition (basic and acidic residues). A disordered region spans residues 1-22 (MTQEVPRRLEPSPFEWKGDAGP). The ABC transporter domain occupies 37-267 (IDLASVTKSY…KIGCQVIEIY (231 aa)). 69–76 (GPNGAGKS) contacts ATP.

The protein belongs to the ABC transporter superfamily. Lipooligosaccharide exporter (TC 3.A.1.102) family. In terms of assembly, the complex is composed of two ATP-binding proteins (NodI) and two transmembrane proteins (NodJ).

It is found in the cell inner membrane. In terms of biological role, part of the ABC transporter complex NodIJ involved in the export of the nodulation factors (Nod factors), the bacterial signal molecules that induce symbiosis and subsequent nodulation induction. Nod factors are LCO (lipo-chitin oligosaccharide), a modified beta-1,4-linked N-acetylglucosamine oligosaccharide. This subunit is responsible for energy coupling to the transport system. In Rhizobium meliloti (Ensifer meliloti), this protein is Nod factor export ATP-binding protein I.